Here is a 616-residue protein sequence, read N- to C-terminus: Glycogenin-1 (616 aa).

UDP is bound by residues Leu10, Tyr16, and Arg95. UDP-alpha-D-glucose-binding residues include Leu10, Tyr16, Arg95, Lys104, Asp120, Asp122, Asn158, Ser159, Asp185, Asp188, and Gln189. The UDP site is built by Asp120 and Asp122. Residues Asp120 and Asp122 each coordinate Mn(2+). O-linked (Glc...) tyrosine glycosylation is present at Tyr230. Residues His247, Gly250, and Lys253 each coordinate UDP. His247 provides a ligand contact to Mn(2+). Residues Gly250 and Lys253 each coordinate UDP-alpha-D-glucose. The segment covering 283 to 302 (HQLNNEVSKPKISDSDKTET) has biased composition (basic and acidic residues). 4 disordered regions span residues 283 to 320 (HQLN…PTTN), 335 to 354 (NQNA…NPVP), 371 to 525 (TNQP…EKDK), and 553 to 588 (RDAT…EMPN). A compositionally biased stretch (basic and acidic residues) spans 377 to 386 (ESREYSKEND). The span at 400–419 (SPPNSTQELNSSYSVVSTQA) shows a compositional bias: polar residues. Residues 450–461 (STAASSNNNVSN) are compositionally biased toward low complexity. Polar residues-rich tracts occupy residues 462-485 (QPDG…PSNP) and 492-503 (DNIQKPSVSTND). Basic and acidic residues predominate over residues 567-576 (DKQEDMKLTA). Polar residues predominate over residues 577 to 586 (EETNQPQQEM). Tyr598 carries O-linked (Glc...) tyrosine glycosylation.

It belongs to the glycosyltransferase 8 family. Glycogenin subfamily. Requires Mn(2+) as cofactor.

It localises to the cytoplasm. It is found in the vacuole. The catalysed reaction is L-tyrosyl-[glycogenin] + UDP-alpha-D-glucose = alpha-D-glucosyl-L-tyrosyl-[glycogenin] + UDP + H(+). It carries out the reaction [1,4-alpha-D-glucosyl](n)-L-tyrosyl-[glycogenin] + UDP-alpha-D-glucose = [1,4-alpha-D-glucosyl](n+1)-L-tyrosyl-[glycogenin] + UDP + H(+). Functionally, self-glucosylating initiator of glycogen synthesis. It catalyzes the formation of a short alpha (1,4)-glucosyl chain covalently attached via a glucose 1-O-tyrosyl linkage to internal tyrosine residues and these chains act as primers for the elongation reaction catalyzed by glycogen synthase. Capable of transferring glucosyl residues to unbound acceptors such as free oligoglucans or oligoglucan derivatives. The sequence is that of Glycogenin-1 from Saccharomyces cerevisiae (strain ATCC 204508 / S288c) (Baker's yeast).